Reading from the N-terminus, the 236-residue chain is UPF0502 protein Bpro_3844 (236 aa).

The protein belongs to the UPF0502 family.

The chain is UPF0502 protein Bpro_3844 from Polaromonas sp. (strain JS666 / ATCC BAA-500).